The sequence spans 147 residues: Small ribosomal subunit protein bS6 (147 aa).

Residues 107 to 147 (KEGRERKARPARAERRDDTEAEDLSDEEGVEAEDFEEEQGV) form a disordered region. Residues 125–147 (TEAEDLSDEEGVEAEDFEEEQGV) are compositionally biased toward acidic residues.

This sequence belongs to the bacterial ribosomal protein bS6 family.

Its function is as follows. Binds together with bS18 to 16S ribosomal RNA. In Cellvibrio japonicus (strain Ueda107) (Pseudomonas fluorescens subsp. cellulosa), this protein is Small ribosomal subunit protein bS6.